A 110-amino-acid chain; its full sequence is Protein RnfH (110 aa).

A disordered region spans residues Arg-86–Asn-110. A compositionally biased stretch (basic and acidic residues) spans Lys-94–Asn-110.

It belongs to the UPF0125 (RnfH) family.

This chain is Protein RnfH, found in Mannheimia succiniciproducens (strain KCTC 0769BP / MBEL55E).